A 347-amino-acid chain; its full sequence is Heat-inducible transcription repressor HrcA (347 aa).

It belongs to the HrcA family.

Its function is as follows. Negative regulator of class I heat shock genes (grpE-dnaK-dnaJ and groELS operons). Prevents heat-shock induction of these operons. The polypeptide is Heat-inducible transcription repressor HrcA (Laribacter hongkongensis (strain HLHK9)).